The chain runs to 590 residues: Protein OS-9 homolog (590 aa).

The signal sequence occupies residues 1–19; sequence MRRPSLALLALSSLPFGSA. Residues 83-106 form a disordered region; it reads SAIRESATANADTDNGDESIGGTS. Asparagine 136 carries N-linked (GlcNAc...) asparagine glycosylation. Positions 167-312 constitute an MRH domain; it reads NQCLHFVSGW…VIHTPRLCAD (146 aa). Residues cysteine 169 and cysteine 182 are joined by a disulfide bond. The a mannooligosaccharide derivative site is built by tryptophan 176, tryptophan 177, and glutamine 189. Positions 198–248 are disordered; sequence GGPPLRDKNSQEYILGTSLPPSSHSQKGKQIEVPNNEQKQLSPPPNTELQA. Intrachain disulfides connect cysteine 265-cysteine 298 and cysteine 280-cysteine 310. A mannooligosaccharide derivative contacts are provided by aspartate 266, arginine 272, glutamate 294, and tyrosine 300. Disordered regions lie at residues 357-376, 436-472, and 545-590; these read AAVT…PEKL, GDDN…MKKM, and YEDE…RDEL. A compositionally biased stretch (basic residues) spans 446–455; it reads HHPKAGKGRK. 2 stretches are compositionally biased toward basic and acidic residues: residues 556-568 and 579-590; these read EAGK…KKGG and EGSKEEYYRDEL. The Prevents secretion from ER motif lies at 587-590; sequence RDEL.

It belongs to the OS-9 family. As to quaternary structure, interacts with missfolded ER lumenal proteins.

The protein localises to the endoplasmic reticulum membrane. Lectin involved in the quality control of the secretory pathway. As a member of the endoplasmic reticulum-associated degradation lumenal (ERAD-L) surveillance system, targets misfolded endoplasmic reticulum lumenal glycoproteins for degradation. The chain is Protein OS-9 homolog (yos-9) from Neurospora crassa (strain ATCC 24698 / 74-OR23-1A / CBS 708.71 / DSM 1257 / FGSC 987).